Consider the following 85-residue polypeptide: MGLLDFLKSKKNTAETAKNRLQIIIAQERNHRGGPDYLPLMQRELLEVIKKYVNIDADAVRVDLVKDGEHDVLDITVALPEDGDK.

The protein belongs to the MinE family.

Its function is as follows. Prevents the cell division inhibition by proteins MinC and MinD at internal division sites while permitting inhibition at polar sites. This ensures cell division at the proper site by restricting the formation of a division septum at the midpoint of the long axis of the cell. The polypeptide is Cell division topological specificity factor (Xanthomonas campestris pv. campestris (strain 8004)).